Consider the following 1406-residue polypeptide: DNA-directed RNA polymerase subunit beta' (1406 aa).

Zn(2+) contacts are provided by C70, C72, C85, and C88. Residues D460, D462, and D464 each coordinate Mg(2+). The Zn(2+) site is built by C814, C888, C895, and C898.

The protein belongs to the RNA polymerase beta' chain family. In terms of assembly, the RNAP catalytic core consists of 2 alpha, 1 beta, 1 beta' and 1 omega subunit. When a sigma factor is associated with the core the holoenzyme is formed, which can initiate transcription. Requires Mg(2+) as cofactor. It depends on Zn(2+) as a cofactor.

It catalyses the reaction RNA(n) + a ribonucleoside 5'-triphosphate = RNA(n+1) + diphosphate. Functionally, DNA-dependent RNA polymerase catalyzes the transcription of DNA into RNA using the four ribonucleoside triphosphates as substrates. This is DNA-directed RNA polymerase subunit beta' from Photorhabdus laumondii subsp. laumondii (strain DSM 15139 / CIP 105565 / TT01) (Photorhabdus luminescens subsp. laumondii).